The chain runs to 956 residues: Calsyntenin-3 (956 aa).

The first 19 residues, 1-19 (MTLLLVSLLLASLLQISSG), serve as a signal peptide directing secretion. At 1 to 21 (MTLLLVSLLLASLLQISSGNK) the chain is on the cytoplasmic side. Over 20–847 (NKANKHKPWI…SHRNSMVPSA (828 aa)) the chain is Extracellular. An intramembrane region (helical) is located at residues 22–42 (ANKHKPWIEAEYQGIVMENDN). Cadherin domains are found at residues 29–145 (IEAE…APVF) and 146–246 (VERL…KPSW). Topologically, residues 43–73 (TVLLNPPLFALDKDAPLRYAGEICGFRLHGS) are cytoplasmic. Positions 74–94 (GVPFEAVILDKATGEGLIRAK) form an intramembrane region, helical. The Cytoplasmic portion of the chain corresponds to 95-139 (EPVDCEAQKEHTFTIQAYDCGEGPDGTNTKKSHKATVHVRVNDVN). An intramembrane region (helical) is located at residues 140–160 (EFAPVFVERLYRAAVTEGKLY). Residues 161-248 (DRILRVEAID…KPTCKPSWQG (88 aa)) lie on the Cytoplasmic side of the membrane. The chain crosses the membrane as a helical span at residues 249-269 (WNKRIEYAPGAGSLALFPGIR). The Lumenal portion of the chain corresponds to 270-357 (LETCDEPLWN…GTQAVQVPLG (88 aa)). N-linked (GlcNAc...) asparagine glycosylation is found at N299, N327, N347, N507, and N740. The chain crosses the membrane as a helical span at residues 848 to 868 (ATLIIVVCVGFLVLMVILGLV). The Cytoplasmic segment spans residues 869–956 (RIHSLHRRVS…RIIESPPHRY (88 aa)). The disordered stretch occupies residues 916–956 (QTCVAGVAGGQQEEEDSSDSEAADSPSSDERRIIESPPHRY). The segment covering 927 to 937 (QEEEDSSDSEA) has biased composition (acidic residues). Residues 943–956 (SDERRIIESPPHRY) show a composition bias toward basic and acidic residues.

Belongs to the calsyntenin family. In terms of assembly, interacts (via cadherin domains) with both alpha and beta isoforms of neurexins (NRXN1, NRXN2 and NRXN3). Directly interacts with APBA2. Forms a tripartite complex with APBA2 and APP. Interacts with low affinity with KLC1. Interacts with SLC23A2/SVCT2. Interacts with CIDEA; inhibiting the lipid transferase activity of CIDEA. Interacts with CIDEC; inhibiting the lipid transferase activity of CIDEC. In terms of processing, proteolytically processed under normal cellular conditions. A primary zeta-cleavage generates a large extracellular (soluble) N-terminal domain (sAlc) and a short C-terminal transmembrane fragment (CTF1). A secondary cleavage catalyzed by gamma-secretase within the transmembrane domain releases the beta-Alc-beta chain in the extracellular milieu and produces an intracellular fragment (AlcICD). This processing is strongly suppressed in the tripartite complex formed with APBA2 and APP, which seems to prevent the association with gamma-secretase. Ubiquitinated: endoplasmic reticulum-localized protein is ubiquitinated and degraded by the endoplasmic reticulum-associated degradation (ERAD) pathway. Restricted to the brain (at protein level). In the cerebral cortex, found in the somas and neuropil of all layers. Expressed at highest levels in neurons of cortical layer 5 and, at lower levels, in neurons of the upper layers. Highly expressed in Purkinje cells. Also found in a few scattered interneurons throughout the granule cell layer and occasionally in neurons in the molecular layer (at protein level). In all layers, high levels in a subpopulation of presumptive GABAergic neurons (based on morphology). As to expression, expression is restricted to adipose tissue, with high expression in thermogenic adipocytes (brown adipose tissue).

Its subcellular location is the postsynaptic cell membrane. It localises to the endoplasmic reticulum membrane. It is found in the golgi apparatus membrane. The protein localises to the cell projection. The protein resides in the dendrite. Its subcellular location is the lipid droplet. Its function is as follows. Postsynaptic adhesion molecule that binds to presynaptic neurexins to mediate both excitatory and inhibitory synapse formation. Promotes synapse development by acting as a cell adhesion molecule at the postsynaptic membrane, which associates with both neurexin-alpha and neurexin-beta proteins at the presynaptic membrane. Regulates the balance between excitatory and inhibitory synapses by inhibiting formation of excitatory parallel-fiber synapses and promoting formation of inhibitory synapses in the same neuron. May also be involved in ascorbate (vitamin C) uptake via its interaction with SLC23A2/SVCT2. Complex formation with APBA2 and APP, stabilizes APP metabolism and enhances APBA2-mediated suppression of beta-APP40 secretion, due to the retardation of intracellular APP maturation. Functionally, adipose-specific isoform that plays a key role in adaptive thermogenesis. Facilitates the efficient use of stored triglyceride by promoting multilocular morphology of thermogenic adipocytes: acts by inhibiting the activity of CIDEA and CIDEC on lipid droplets, thereby preventing lipid droplet fusion and facilitating lipid utilization. May also participate in adaptive thermogenesis by promoting sympathetic innervation of thermogenic adipose tissue: acts by driving secretion of neurotrophic factor S100B from brown adipocytes, stimulating neurite outgrowth from sympathetic neurons. This chain is Calsyntenin-3, found in Mus musculus (Mouse).